A 331-amino-acid chain; its full sequence is Adenosine deaminase (331 aa).

Zn(2+) is bound by residues H12 and H14. Residues H14, D16, and G170 each coordinate substrate. H197 is a Zn(2+) binding site. E200 (proton donor) is an active-site residue. D278 is a Zn(2+) binding site. D279 is a binding site for substrate.

It belongs to the metallo-dependent hydrolases superfamily. Adenosine and AMP deaminases family. Adenosine deaminase subfamily. The cofactor is Zn(2+).

The catalysed reaction is adenosine + H2O + H(+) = inosine + NH4(+). It catalyses the reaction 2'-deoxyadenosine + H2O + H(+) = 2'-deoxyinosine + NH4(+). Catalyzes the hydrolytic deamination of adenosine and 2-deoxyadenosine. This Shewanella baltica (strain OS185) protein is Adenosine deaminase.